The sequence spans 76 residues: MKTLVEHIAMALVDHPDDVRVSEHDDGHSLHIELSVHPDDMGKVIGKQGRTAKALRSVVYAAATKQKRRVRLDIID.

The KH domain maps to 29 to 76 (SLHIELSVHPDDMGKVIGKQGRTAKALRSVVYAAATKQKRRVRLDIID).

It belongs to the KhpA RNA-binding protein family. In terms of assembly, forms a complex with KhpB.

It localises to the cytoplasm. Its function is as follows. A probable RNA chaperone. Forms a complex with KhpB which binds to cellular RNA and controls its expression. Plays a role in peptidoglycan (PG) homeostasis and cell length regulation. The chain is RNA-binding protein KhpA from Halalkalibacterium halodurans (strain ATCC BAA-125 / DSM 18197 / FERM 7344 / JCM 9153 / C-125) (Bacillus halodurans).